A 346-amino-acid chain; its full sequence is DNA-directed RNA polymerase subunit alpha (346 aa).

The alpha N-terminal domain (alpha-NTD) stretch occupies residues 1-233; that stretch reads MLRDEVAVSA…DLFIPFLHAE (233 aa). The tract at residues 268 to 346 is alpha C-terminal domain (alpha-CTD); that stretch reads IELKCIFIDQ…NKFLIGNPSE (79 aa).

This sequence belongs to the RNA polymerase alpha chain family. In terms of assembly, in plastids the minimal PEP RNA polymerase catalytic core is composed of four subunits: alpha, beta, beta', and beta''. When a (nuclear-encoded) sigma factor is associated with the core the holoenzyme is formed, which can initiate transcription.

Its subcellular location is the plastid. The protein resides in the chloroplast. The enzyme catalyses RNA(n) + a ribonucleoside 5'-triphosphate = RNA(n+1) + diphosphate. Functionally, DNA-dependent RNA polymerase catalyzes the transcription of DNA into RNA using the four ribonucleoside triphosphates as substrates. The polypeptide is DNA-directed RNA polymerase subunit alpha (Ranunculus macranthus (Large buttercup)).